A 360-amino-acid polypeptide reads, in one-letter code: MKISSLSILPLLGVVSAGIHGKKPNGPTYAGTNPGCTWYLDLVDDSYTCENIESQWDLSHEAFVAWNPGVKKDCSGLKVGLSVCVEAPMESITATPTSEASTSSETSSASPTASRPPLPSPTQDGLVSNCTKFHQAVSGDTCSKIISRYKPITLDQFIEWNPALEKDCSGLWSGYYYCVGIPGTPSAPLTSMPASTAHSGTNSNATVKPAAPGPTQDGIANNCQRWHKAVSGNTCASLLKQYGTFTLEEFIKWNPAVGEDCSGLWLNYYYCIGIPGTPTTKNSVPKPTTTACNTPGLPSPTQPGAICQCSKWHQVRQGETCDSITRNYRISISKFKEWNPNVGKDCYGLWLRYYVCVGGK.

A signal peptide spans 1–21 (MKISSLSILPLLGVVSAGIHG). One can recognise a LysM 1 domain in the interval 37-85 (TWYLDLVDDSYTCENIESQWDLSHEAFVAWNPGVKKDCSGLKVGLSVCV). Low complexity predominate over residues 94–113 (ATPTSEASTSSETSSASPTA). The interval 94–125 (ATPTSEASTSSETSSASPTASRPPLPSPTQDG) is disordered. Asn129 carries an N-linked (GlcNAc...) asparagine glycan. In terms of domain architecture, LysM 2 spans 132–179 (KFHQAVSGDTCSKIISRYKPITLDQFIEWNPALEKDCSGLWSGYYYCV). Residue Asn204 is glycosylated (N-linked (GlcNAc...) asparagine). LysM domains follow at residues 225–272 (RWHK…YYCI) and 311–357 (KWHQ…YVCV).

The protein belongs to the secreted LysM effector family.

Its subcellular location is the secreted. The protein localises to the cell wall. Its function is as follows. Secreted effector that binds two substrates, chitin and N-linked oligosaccharides associated with human skin glycoproteins. Could provide the pathogen with three important functions including shielding host cell wall chitin from the human immune system, shielding the pathogen's glycoproteins from host degradation and immune surveillance, and helping facilitate pathogen adhesion to human skin. The sequence is that of Secreted LysM effector LysM2 from Trichophyton rubrum (strain ATCC MYA-4607 / CBS 118892) (Athlete's foot fungus).